Here is a 222-residue protein sequence, read N- to C-terminus: Protein MKS1 (222 aa).

Residues 1–61 form a disordered region; sequence MDPSEYFAGG…PNRDQPPPYI (61 aa). Positions 12 to 21 are enriched in polar residues; that stretch reads PSDQQNQKRQ. Serine 30 is modified (phosphoserine). Basic residues predominate over residues 37 to 46; that stretch reads DSHKIKKPPK. The span at 47–61 shows a compositional bias: pro residues; it reads HPAPPPNRDQPPPYI. Residue serine 72 is modified to Phosphoserine. The VQ signature appears at 83 to 92; the sequence is FMNVVQRLTG. The tract at residues 105 to 130 is disordered; it reads GDVSPAARLASTENASPRGGKEPAAR. Phosphoserine is present on residues serine 108 and serine 120.

In terms of assembly, interacts with MPK4, WRKY25 and WRKY33. Post-translationally, phosphorylated on serine residue by MPK4.

The protein localises to the nucleus. Regulator of plant defense response. May contribute to MPK4-regulated defense activation by coupling the kinase to specific WRKY transcription factors. This Arabidopsis thaliana (Mouse-ear cress) protein is Protein MKS1 (MKS1).